Here is a 124-residue protein sequence, read N- to C-terminus: Urease subunit beta (124 aa).

It belongs to the urease beta subunit family. In terms of assembly, heterotrimer of UreA (gamma), UreB (beta) and UreC (alpha) subunits. Three heterotrimers associate to form the active enzyme.

Its subcellular location is the cytoplasm. The catalysed reaction is urea + 2 H2O + H(+) = hydrogencarbonate + 2 NH4(+). It functions in the pathway nitrogen metabolism; urea degradation; CO(2) and NH(3) from urea (urease route): step 1/1. This Ureaplasma parvum serovar 3 (strain ATCC 27815 / 27 / NCTC 11736) protein is Urease subunit beta.